Reading from the N-terminus, the 692-residue chain is DNA ligase (692 aa).

Residues 40-44, 89-90, and E121 contribute to the NAD(+) site; these read DAAYD and SL. Catalysis depends on K123, which acts as the N6-AMP-lysine intermediate. The NAD(+) site is built by R144, E181, K297, and K321. Zn(2+) contacts are provided by C415, C417, C439, and C445. The region spanning 614–692 is the BRCT domain; it reads KTDTAVAGKT…EDEWLEMVGS (79 aa).

It belongs to the NAD-dependent DNA ligase family. LigA subfamily. It depends on Mg(2+) as a cofactor. Mn(2+) serves as cofactor.

The enzyme catalyses NAD(+) + (deoxyribonucleotide)n-3'-hydroxyl + 5'-phospho-(deoxyribonucleotide)m = (deoxyribonucleotide)n+m + AMP + beta-nicotinamide D-nucleotide.. Functionally, DNA ligase that catalyzes the formation of phosphodiester linkages between 5'-phosphoryl and 3'-hydroxyl groups in double-stranded DNA using NAD as a coenzyme and as the energy source for the reaction. It is essential for DNA replication and repair of damaged DNA. The sequence is that of DNA ligase from Phenylobacterium zucineum (strain HLK1).